The primary structure comprises 817 residues: Leucine--tRNA ligase (817 aa).

The 'HIGH' region motif lies at 42 to 52; sequence PYPSGRLHMGH. The 'KMSKS' region signature appears at 576–580; that stretch reads KMSKS. K579 is a binding site for ATP.

The protein belongs to the class-I aminoacyl-tRNA synthetase family.

It localises to the cytoplasm. It catalyses the reaction tRNA(Leu) + L-leucine + ATP = L-leucyl-tRNA(Leu) + AMP + diphosphate. The chain is Leucine--tRNA ligase from Halorhodospira halophila (strain DSM 244 / SL1) (Ectothiorhodospira halophila (strain DSM 244 / SL1)).